We begin with the raw amino-acid sequence, 185 residues long: Translation initiation factor IF-3 (185 aa).

The protein belongs to the IF-3 family. Monomer.

The protein localises to the cytoplasm. IF-3 binds to the 30S ribosomal subunit and shifts the equilibrium between 70S ribosomes and their 50S and 30S subunits in favor of the free subunits, thus enhancing the availability of 30S subunits on which protein synthesis initiation begins. The protein is Translation initiation factor IF-3 of Coxiella burnetii (strain RSA 493 / Nine Mile phase I).